Here is a 454-residue protein sequence, read N- to C-terminus: Bifunctional protein GlmU (454 aa).

Positions 1-226 (MSTTVIILAA…AFEVEGVNDR (226 aa)) are pyrophosphorylase. UDP-N-acetyl-alpha-D-glucosamine-binding positions include 8–11 (LAAG), Lys-22, Gln-73, 78–79 (GT), 100–102 (YGD), Gly-137, Glu-151, Asn-166, and Asn-224. Asp-102 is a binding site for Mg(2+). Residue Asn-224 coordinates Mg(2+). The linker stretch occupies residues 227–247 (LQLAALEREFQKQQAKELMQQ). Residues 248 to 454 (GVTFADPARF…NYQRPQKLKK (207 aa)) form an N-acetyltransferase region. Residues Arg-330 and Lys-348 each contribute to the UDP-N-acetyl-alpha-D-glucosamine site. His-360 acts as the Proton acceptor in catalysis. Residues Tyr-363 and Asn-374 each contribute to the UDP-N-acetyl-alpha-D-glucosamine site. Residues Ala-377, 383–384 (NY), Ser-402, Ala-420, and Arg-437 contribute to the acetyl-CoA site.

It in the N-terminal section; belongs to the N-acetylglucosamine-1-phosphate uridyltransferase family. This sequence in the C-terminal section; belongs to the transferase hexapeptide repeat family. In terms of assembly, homotrimer. Requires Mg(2+) as cofactor.

The protein resides in the cytoplasm. It catalyses the reaction alpha-D-glucosamine 1-phosphate + acetyl-CoA = N-acetyl-alpha-D-glucosamine 1-phosphate + CoA + H(+). It carries out the reaction N-acetyl-alpha-D-glucosamine 1-phosphate + UTP + H(+) = UDP-N-acetyl-alpha-D-glucosamine + diphosphate. It functions in the pathway nucleotide-sugar biosynthesis; UDP-N-acetyl-alpha-D-glucosamine biosynthesis; N-acetyl-alpha-D-glucosamine 1-phosphate from alpha-D-glucosamine 6-phosphate (route II): step 2/2. The protein operates within nucleotide-sugar biosynthesis; UDP-N-acetyl-alpha-D-glucosamine biosynthesis; UDP-N-acetyl-alpha-D-glucosamine from N-acetyl-alpha-D-glucosamine 1-phosphate: step 1/1. Its pathway is bacterial outer membrane biogenesis; LPS lipid A biosynthesis. In terms of biological role, catalyzes the last two sequential reactions in the de novo biosynthetic pathway for UDP-N-acetylglucosamine (UDP-GlcNAc). The C-terminal domain catalyzes the transfer of acetyl group from acetyl coenzyme A to glucosamine-1-phosphate (GlcN-1-P) to produce N-acetylglucosamine-1-phosphate (GlcNAc-1-P), which is converted into UDP-GlcNAc by the transfer of uridine 5-monophosphate (from uridine 5-triphosphate), a reaction catalyzed by the N-terminal domain. The chain is Bifunctional protein GlmU from Acinetobacter baumannii (strain ACICU).